Consider the following 100-residue polypeptide: Small ribosomal subunit protein uS14c (100 aa).

Belongs to the universal ribosomal protein uS14 family. As to quaternary structure, part of the 30S ribosomal subunit.

The protein localises to the plastid. Binds 16S rRNA, required for the assembly of 30S particles. The chain is Small ribosomal subunit protein uS14c from Euglena longa (Euglenophycean alga).